The primary structure comprises 357 residues: MDDLKAKYLGQIAEATDENALEAVRLAAVGKKGEVALKMRELGKMTPEERQVAGPALNALKDEINAALAAKKAALGDAALDERLRSEWLDVTLPTRPRRQGSIHPISQASEELTAIFAEMGFSAQEGPRVDTDWYNFDALNIPGHHPARAEMDTFYMHRAEGDDRPPHVLRTHTSPVQIRSMEKLGAPLRIICPGGVYRADYDQTHTPMFHQVEGLALDENISMANLKWVLEEFVKSFFEVDEVELRFRASHFPFTEPSAEVDIRCSWDNGQLKIGEGDDWLEILGSGMVHPKVIAAGGIDPEKYQGFAFGIGIDRLAMLKYGIPDLRAFFESDLRWLRHYGFSCLDVPTLHGGLSR.

E257 provides a ligand contact to Mg(2+).

The protein belongs to the class-II aminoacyl-tRNA synthetase family. Phe-tRNA synthetase alpha subunit type 1 subfamily. In terms of assembly, tetramer of two alpha and two beta subunits. Mg(2+) serves as cofactor.

The protein localises to the cytoplasm. It catalyses the reaction tRNA(Phe) + L-phenylalanine + ATP = L-phenylalanyl-tRNA(Phe) + AMP + diphosphate + H(+). The sequence is that of Phenylalanine--tRNA ligase alpha subunit from Ruegeria sp. (strain TM1040) (Silicibacter sp.).